The sequence spans 367 residues: Voltage-gated potassium channel subunit beta-2 (367 aa).

NADP(+)-binding residues include Thr56, Trp57, Gln63, and Asp85. Tyr90 serves as the catalytic Proton donor/acceptor. Residues Asn158, Ser188, Arg189, Gln214, Trp243, Ser244, Pro245, Leu246, Ala247, Cys248, Lys254, Tyr262, Arg264, Gly323, Ser325, Gln329, Glu332, and Asn333 each contribute to the NADP(+) site.

The protein belongs to the shaker potassium channel beta subunit family. Forms heteromultimeric complex with alpha subunits.

The protein resides in the cytoplasm. The protein localises to the membrane. It localises to the cell membrane. Its subcellular location is the cell projection. It is found in the axon. The protein resides in the synapse. The protein localises to the synaptosome. It localises to the cytoskeleton. In terms of biological role, regulatory subunit of the voltage-gated potassium (Kv) Shaker channels composed of pore-forming and potassium-conducting alpha subunits and of regulatory beta subunits. The beta-2/KCNAB2 cytoplasmic subunit may promote potassium channel closure via a mechanism that does not involve physical obstruction of the channel pore. Enhances current amplitude of Kv1.1/KCNA1 and Kv2.2/KCNA2 channels. May display nicotinamide adenine dinucleotide phosphate (NADPH)-dependent aldoketoreductase activity by catalyzing the NADPH-dependent reduction of a wide range of aldehyde and ketone substrates. The binding of oxidized and reduced nucleotide may alter Kv channel gating and contribute to dynamic fine tuning of cell excitability. The protein is Voltage-gated potassium channel subunit beta-2 (kcnab2) of Xenopus laevis (African clawed frog).